Consider the following 131-residue polypeptide: Small ribosomal subunit protein uS11 (131 aa).

This sequence belongs to the universal ribosomal protein uS11 family. As to quaternary structure, part of the 30S ribosomal subunit. Interacts with proteins S7 and S18. Binds to IF-3.

Functionally, located on the platform of the 30S subunit, it bridges several disparate RNA helices of the 16S rRNA. Forms part of the Shine-Dalgarno cleft in the 70S ribosome. The protein is Small ribosomal subunit protein uS11 of Dictyoglomus turgidum (strain DSM 6724 / Z-1310).